The primary structure comprises 547 residues: Chaperonin GroEL (547 aa).

ATP-binding positions include 30–33 (TLGP), Lys-51, 87–91 (DGTTT), Gly-415, 478–480 (NAA), and Asp-494.

It belongs to the chaperonin (HSP60) family. Forms a cylinder of 14 subunits composed of two heptameric rings stacked back-to-back. Interacts with the co-chaperonin GroES.

It is found in the cytoplasm. It catalyses the reaction ATP + H2O + a folded polypeptide = ADP + phosphate + an unfolded polypeptide.. Its function is as follows. Together with its co-chaperonin GroES, plays an essential role in assisting protein folding. The GroEL-GroES system forms a nano-cage that allows encapsulation of the non-native substrate proteins and provides a physical environment optimized to promote and accelerate protein folding. The sequence is that of Chaperonin GroEL from Geobacter sp. (strain M21).